The chain runs to 218 residues: Small ribosomal subunit protein uS3c (218 aa).

Positions 47–118 (VQKHMRISSG…RLNITITRIA (72 aa)) constitute a KH type-2 domain.

Belongs to the universal ribosomal protein uS3 family. Part of the 30S ribosomal subunit.

The protein localises to the plastid. Its subcellular location is the chloroplast. This is Small ribosomal subunit protein uS3c (rps3) from Amborella trichopoda.